Consider the following 443-residue polypeptide: Thymidine phosphorylase (443 aa).

Belongs to the thymidine/pyrimidine-nucleoside phosphorylase family. As to quaternary structure, homodimer.

The enzyme catalyses thymidine + phosphate = 2-deoxy-alpha-D-ribose 1-phosphate + thymine. It participates in pyrimidine metabolism; dTMP biosynthesis via salvage pathway; dTMP from thymine: step 1/2. In terms of biological role, the enzymes which catalyze the reversible phosphorolysis of pyrimidine nucleosides are involved in the degradation of these compounds and in their utilization as carbon and energy sources, or in the rescue of pyrimidine bases for nucleotide synthesis. This is Thymidine phosphorylase from Aliivibrio salmonicida (strain LFI1238) (Vibrio salmonicida (strain LFI1238)).